A 62-amino-acid chain; its full sequence is Photosystem II reaction center protein Z (62 aa).

Helical transmembrane passes span 8–28 (VLTA…VAYA) and 41–61 (YVGS…NFLV).

Belongs to the PsbZ family. As to quaternary structure, PSII is composed of 1 copy each of membrane proteins PsbA, PsbB, PsbC, PsbD, PsbE, PsbF, PsbH, PsbI, PsbJ, PsbK, PsbL, PsbM, PsbT, PsbX, PsbY, PsbZ, Psb30/Ycf12, peripheral proteins PsbO, CyanoQ (PsbQ), PsbU, PsbV and a large number of cofactors. It forms dimeric complexes.

The protein localises to the cellular thylakoid membrane. Its function is as follows. May control the interaction of photosystem II (PSII) cores with the light-harvesting antenna, regulates electron flow through the 2 photosystem reaction centers. PSII is a light-driven water plastoquinone oxidoreductase, using light energy to abstract electrons from H(2)O, generating a proton gradient subsequently used for ATP formation. The polypeptide is Photosystem II reaction center protein Z (Crocosphaera subtropica (strain ATCC 51142 / BH68) (Cyanothece sp. (strain ATCC 51142))).